Here is a 207-residue protein sequence, read N- to C-terminus: 2,3-bisphosphoglycerate-dependent phosphoglycerate mutase (207 aa).

Residues 10–17 (RHGQSEWN), 23–24 (TG), arginine 62, 89–92 (ERDY), lysine 100, 116–117 (RR), and 160–161 (GN) each bind substrate. Histidine 11 (tele-phosphohistidine intermediate) is an active-site residue. The active-site Proton donor/acceptor is glutamate 89.

It belongs to the phosphoglycerate mutase family. BPG-dependent PGAM subfamily. Homodimer.

It catalyses the reaction (2R)-2-phosphoglycerate = (2R)-3-phosphoglycerate. The protein operates within carbohydrate degradation; glycolysis; pyruvate from D-glyceraldehyde 3-phosphate: step 3/5. Catalyzes the interconversion of 2-phosphoglycerate and 3-phosphoglycerate. The sequence is that of 2,3-bisphosphoglycerate-dependent phosphoglycerate mutase from Xanthobacter autotrophicus (strain ATCC BAA-1158 / Py2).